The primary structure comprises 397 residues: Digeranylgeranylglycerophospholipid reductase 3 (397 aa).

FAD is bound by residues alanine 16, aspartate 35, cysteine 46, alanine 47, glycine 49, arginine 102, alanine 126, aspartate 283, glycine 295, and isoleucine 296. Residue lysine 338 coordinates a 2,3-bis-O-(geranylgeranyl)-sn-glycerol 1-phospholipid.

Belongs to the geranylgeranyl reductase family. DGGGPL reductase subfamily. The cofactor is FAD.

The catalysed reaction is a 2,3-bis-O-phytanyl-sn-glycerol 1-phospholipid + 8 A = a 2,3-bis-O-(geranylgeranyl)-sn-glycerol 1-phospholipid + 8 AH2. The enzyme catalyses 2,3-bis-O-(phytanyl)-sn-glycerol 1-phosphate + 8 A = 2,3-bis-O-(geranylgeranyl)-sn-glycerol 1-phosphate + 8 AH2. It carries out the reaction CDP-2,3-bis-O-(geranylgeranyl)-sn-glycerol + 8 AH2 = CDP-2,3-bis-O-(phytanyl)-sn-glycerol + 8 A. It catalyses the reaction archaetidylserine + 8 AH2 = 2,3-bis-O-phytanyl-sn-glycero-3-phospho-L-serine + 8 A. It functions in the pathway membrane lipid metabolism; glycerophospholipid metabolism. Is involved in the reduction of 2,3-digeranylgeranylglycerophospholipids (unsaturated archaeols) into 2,3-diphytanylglycerophospholipids (saturated archaeols) in the biosynthesis of archaeal membrane lipids. Catalyzes the formation of archaetidic acid (2,3-di-O-phytanyl-sn-glyceryl phosphate) from 2,3-di-O-geranylgeranylglyceryl phosphate (DGGGP) via the hydrogenation of each double bond of the isoprenoid chains. Is also probably able to reduce double bonds of geranyl groups in CDP-2,3-bis-O-(geranylgeranyl)-sn-glycerol and archaetidylserine, thus acting at various stages in the biosynthesis of archaeal membrane lipids. In Methanosphaera stadtmanae (strain ATCC 43021 / DSM 3091 / JCM 11832 / MCB-3), this protein is Digeranylgeranylglycerophospholipid reductase 3.